We begin with the raw amino-acid sequence, 463 residues long: tRNA modification GTPase MnmE (463 aa).

3 residues coordinate (6S)-5-formyl-5,6,7,8-tetrahydrofolate: arginine 26, glutamate 88, and arginine 127. The 160-residue stretch at 224 to 383 (GLATAIIGRP…LEQRIAKMFF (160 aa)) folds into the TrmE-type G domain. A K(+)-binding site is contributed by asparagine 234. GTP is bound by residues 234-239 (NVGKSS), 253-259 (TDVAGTT), and 278-281 (DTAG). Serine 238 is a Mg(2+) binding site. Residues threonine 253, valine 255, and threonine 258 each coordinate K(+). Threonine 259 contributes to the Mg(2+) binding site. A (6S)-5-formyl-5,6,7,8-tetrahydrofolate-binding site is contributed by lysine 463.

This sequence belongs to the TRAFAC class TrmE-Era-EngA-EngB-Septin-like GTPase superfamily. TrmE GTPase family. As to quaternary structure, homodimer. Heterotetramer of two MnmE and two MnmG subunits. K(+) serves as cofactor.

It localises to the cytoplasm. In terms of biological role, exhibits a very high intrinsic GTPase hydrolysis rate. Involved in the addition of a carboxymethylaminomethyl (cmnm) group at the wobble position (U34) of certain tRNAs, forming tRNA-cmnm(5)s(2)U34. The sequence is that of tRNA modification GTPase MnmE from Lactiplantibacillus plantarum (strain ATCC BAA-793 / NCIMB 8826 / WCFS1) (Lactobacillus plantarum).